A 569-amino-acid chain; its full sequence is Peroxisomal targeting signal receptor (569 aa).

A Glycyl cysteine thioester (Cys-Gly) (interchain with G-Cter in ubiquitin) cross-link involves residue Cys9. The tract at residues 10 to 32 (AANANPLAQFFKQSQHDTSLEQS) is amphipathic helix 1 (AH1). Lys21 participates in a covalent cross-link: Glycyl lysine isopeptide (Lys-Gly) (interchain with G-Cter in ubiquitin). Residues 23–42 (SQHDTSLEQSLRNSAHDTHQ) form a disordered region. The segment at 57 to 72 (RAHMEQFMNQSTPFNF) is amphipathic helix 2 (AH2). 2 consecutive short sequence motifs (wxxxF/Y motif) follow at residues 118-122 (WSSEF) and 183-187 (WEQQF). Positions 218-234 (FDQVWDNIQETYADNML) are amphipathic helix 4 (AH4). Positions 243–247 (WEKDF) match the WxxxF/Y motif 3 motif. TPR repeat units lie at residues 272-305 (LDAY…NPGH), 306-339 (VDAW…SPQN), 340-377 (LVAL…VAER), 378-415 (ARNA…ANMD), 416-449 (SEVQ…NPND), 450-483 (ALAW…NPNF), and 484-517 (VRAR…HEVE).

The protein belongs to the peroxisomal targeting signal receptor family. In terms of assembly, interacts (via WxxxF/Y and LVxEF motifs) with PEX14; promoting translocation through the PEX13-PEX14 docking complex. Post-translationally, monoubiquitinated at Cys-9 by PEX2 during PEX5 passage through the retrotranslocation channel: monoubiquitination acts as a signal for PEX5 extraction and is required for proper export from peroxisomes and recycling. When PEX5 recycling is compromised, polyubiquitinated at Lys-21 by PEX10 during its passage through the retrotranslocation channel, leading to its degradation.

It is found in the cytoplasm. Its subcellular location is the cytosol. It localises to the peroxisome matrix. In terms of biological role, receptor that mediates peroxisomal import of proteins containing a C-terminal PTS1-type tripeptide peroxisomal targeting signal (SKL-type). Binds to cargo proteins containing a PTS1 peroxisomal targeting signal in the cytosol, and translocates them into the peroxisome matrix by passing through the PEX13-PEX14 docking complex along with cargo proteins. PEX5 receptor is then retrotranslocated into the cytosol, leading to release of bound cargo in the peroxisome matrix, and reset for a subsequent peroxisome import cycle. The polypeptide is Peroxisomal targeting signal receptor (PEX5) (Pichia angusta (Yeast)).